Reading from the N-terminus, the 1066-residue chain is Protein sts5 (1066 aa).

A compositionally biased stretch (low complexity) spans 18–28; it reads QQDPSDAQSSP. 3 disordered regions span residues 18 to 40, 154 to 178, and 247 to 286; these read QQDP…SLTT, ATST…SPNS, and SNFR…RKNL. A compositionally biased stretch (polar residues) spans 29-40; the sequence is TFVPSANPSLTT. Thr157 bears the Phosphothreonine mark. Residues 168–178 are compositionally biased toward low complexity; the sequence is HSVASVSSPNS. Thr262 carries the phosphothreonine modification. Ser264 is subject to Phosphoserine. Residues 270–280 show a composition bias toward gly residues; it reads SGSGFSSGGSG. Thr377 carries the post-translational modification Phosphothreonine. Positions 454–480 are disordered; that stretch reads SSAANKERQTSSGNQGSSNNSGNDKPK. The span at 464–476 shows a compositional bias: low complexity; the sequence is SSGNQGSSNNSGN. One can recognise a CSD2 domain in the interval 482 to 556; sequence VWFKPSDKRV…AQVSALLHDT (75 aa). An RNB domain is found at 618-934; sequence NINSSSATDF…VHYQLQLLLR (317 aa). In terms of domain architecture, DIS3L2 C-terminal spans 983-1033; it reads QDGLVCFVAPSYFDVFFPSLGMEKRVHLDLLNLTHVRFEEDQGILSLYDES.

Belongs to the RNR ribonuclease family. In terms of assembly, interacts with serine/threonine phosphatase ppe1, protein kinase C and an osmosensing MAP kinase.

It localises to the cytoplasm. In terms of biological role, required for the maintenance of cell shape during interphase. Required for localization of cortical actin to the growing tips before mitosis. This is Protein sts5 (sts5) from Schizosaccharomyces pombe (strain 972 / ATCC 24843) (Fission yeast).